Reading from the N-terminus, the 332-residue chain is L-lactate dehydrogenase A chain (332 aa).

NAD(+) is bound by residues Gly-29–Lys-57 and Arg-99. The substrate site is built by Arg-106, Asn-138, and Arg-169. Asn-138 contacts NAD(+). His-193 acts as the Proton acceptor in catalysis. Thr-248 provides a ligand contact to substrate.

Belongs to the LDH/MDH superfamily. LDH family. Homotetramer.

The protein localises to the cytoplasm. It carries out the reaction (S)-lactate + NAD(+) = pyruvate + NADH + H(+). Its pathway is fermentation; pyruvate fermentation to lactate; (S)-lactate from pyruvate: step 1/1. Its function is as follows. Interconverts simultaneously and stereospecifically pyruvate and lactate with concomitant interconversion of NADH and NAD(+). The chain is L-lactate dehydrogenase A chain (ldha) from Fundulus heteroclitus (Killifish).